We begin with the raw amino-acid sequence, 298 residues long: Lipoyl synthase (298 aa).

The [4Fe-4S] cluster site is built by Cys40, Cys45, Cys51, Cys67, Cys71, Cys74, and Ser280. In terms of domain architecture, Radical SAM core spans Ala53 to Ser269.

The protein belongs to the radical SAM superfamily. Lipoyl synthase family. It depends on [4Fe-4S] cluster as a cofactor.

It localises to the cytoplasm. The catalysed reaction is [[Fe-S] cluster scaffold protein carrying a second [4Fe-4S](2+) cluster] + N(6)-octanoyl-L-lysyl-[protein] + 2 oxidized [2Fe-2S]-[ferredoxin] + 2 S-adenosyl-L-methionine + 4 H(+) = [[Fe-S] cluster scaffold protein] + N(6)-[(R)-dihydrolipoyl]-L-lysyl-[protein] + 4 Fe(3+) + 2 hydrogen sulfide + 2 5'-deoxyadenosine + 2 L-methionine + 2 reduced [2Fe-2S]-[ferredoxin]. It functions in the pathway protein modification; protein lipoylation via endogenous pathway; protein N(6)-(lipoyl)lysine from octanoyl-[acyl-carrier-protein]. Catalyzes the radical-mediated insertion of two sulfur atoms into the C-6 and C-8 positions of the octanoyl moiety bound to the lipoyl domains of lipoate-dependent enzymes, thereby converting the octanoylated domains into lipoylated derivatives. The chain is Lipoyl synthase from Bacillus pumilus (strain SAFR-032).